We begin with the raw amino-acid sequence, 277 residues long: Shikimate dehydrogenase (NADP(+)) (277 aa).

Residues 15–17 and threonine 62 each bind shikimate; that span reads SLS. The active-site Proton acceptor is lysine 66. The shikimate site is built by asparagine 87 and aspartate 102. Residues 127 to 131, 151 to 156, and isoleucine 219 each bind NADP(+); these read GAGGA and NRTVDK. Tyrosine 221 is a binding site for shikimate. Position 242 (glycine 242) interacts with NADP(+).

The protein belongs to the shikimate dehydrogenase family. Homodimer.

It catalyses the reaction shikimate + NADP(+) = 3-dehydroshikimate + NADPH + H(+). Its pathway is metabolic intermediate biosynthesis; chorismate biosynthesis; chorismate from D-erythrose 4-phosphate and phosphoenolpyruvate: step 4/7. Its function is as follows. Involved in the biosynthesis of the chorismate, which leads to the biosynthesis of aromatic amino acids. Catalyzes the reversible NADPH linked reduction of 3-dehydroshikimate (DHSA) to yield shikimate (SA). In Bacillus cereus (strain AH187), this protein is Shikimate dehydrogenase (NADP(+)).